The following is a 1005-amino-acid chain: Ephrin type-A receptor 8 (1005 aa).

Positions methionine 1 to alanine 27 are cleaved as a signal peptide. Residues alanine 28–threonine 542 lie on the Extracellular side of the membrane. An Eph LBD domain is found at glutamate 31 to arginine 209. Fibronectin type-III domains lie at proline 328 to alanine 438 and alanine 439 to proline 534. N-linked (GlcNAc...) asparagine glycans are attached at residues asparagine 340, asparagine 407, and asparagine 432. A helical transmembrane segment spans residues isoleucine 543–cysteine 563. The tract at residues lysine 564 to tyrosine 570 is mediates interaction with ANKS1A and ANKS1B. Over lysine 564–leucine 1005 the chain is Cytoplasmic. The mediates interaction with PIK3CG and required for endocytosis stretch occupies residues alanine 589–glycine 644. Tyrosine 616 carries the phosphotyrosine; by autocatalysis modification. Residues isoleucine 635–isoleucine 896 enclose the Protein kinase domain. Residues isoleucine 641–valine 649 and lysine 667 contribute to the ATP site. Aspartate 760 (proton acceptor) is an active-site residue. Tyrosine 839 carries the post-translational modification Phosphotyrosine; by autocatalysis. Residues glycine 930–glutamine 994 enclose the SAM domain. Residues arginine 1003–leucine 1005 carry the PDZ-binding motif.

The protein belongs to the protein kinase superfamily. Tyr protein kinase family. Ephrin receptor subfamily. In terms of assembly, heterotetramer upon binding of the ligand. The heterotetramer is composed of an ephrin dimer and a receptor dimer. Oligomerization is probably required to induce biological responses. May also form heterodimers with other ephrin receptors. Interacts with FYN; possible downstream effector of EPHA8 in regulation of cell adhesion. Interacts with PIK3CG; regulates integrin-mediated cell adhesion to substrate. Interacts with TIAM1; regulates clathrin-mediated endocytosis of EPHA8. Interacts with ANKS1A and ANKS1B; EPHA8 kinase activity-independent but stimulated by EPHA8 ubiquitination. In terms of processing, phosphorylated. Phosphorylation is stimulated upon binding of its ligands including EFNA2, EFNA3 and EFNA5. Autophosphorylation on Tyr-616 is critical for association with FYN. Autophosphorylation on Tyr-839 modulates tyrosine kinase activity. Post-translationally, ubiquitinated. Ubiquitination by CBL regulates the receptor stability and activity through proteasomal degradation. ANKS1A prevents ubiquitination and degradation.

The protein localises to the cell membrane. It localises to the cell projection. The protein resides in the early endosome membrane. The enzyme catalyses L-tyrosyl-[protein] + ATP = O-phospho-L-tyrosyl-[protein] + ADP + H(+). Functionally, receptor tyrosine kinase which binds promiscuously GPI-anchored ephrin-A family ligands residing on adjacent cells, leading to contact-dependent bidirectional signaling into neighboring cells. The signaling pathway downstream of the receptor is referred to as forward signaling while the signaling pathway downstream of the ephrin ligand is referred to as reverse signaling. The GPI-anchored ephrin-A EFNA2, EFNA3, and EFNA5 are able to activate EPHA8 through phosphorylation. With EFNA5 may regulate integrin-mediated cell adhesion and migration on fibronectin substrate but also neurite outgrowth. During development of the nervous system also plays a role in axon guidance. Downstream effectors of the EPHA8 signaling pathway include FYN which promotes cell adhesion upon activation by EPHA8 and the MAP kinases in the stimulation of neurite outgrowth. The protein is Ephrin type-A receptor 8 (EPHA8) of Homo sapiens (Human).